The chain runs to 285 residues: 2-dehydro-3-deoxyphosphooctonate aldolase (285 aa).

This sequence belongs to the KdsA family.

It is found in the cytoplasm. It catalyses the reaction D-arabinose 5-phosphate + phosphoenolpyruvate + H2O = 3-deoxy-alpha-D-manno-2-octulosonate-8-phosphate + phosphate. It participates in carbohydrate biosynthesis; 3-deoxy-D-manno-octulosonate biosynthesis; 3-deoxy-D-manno-octulosonate from D-ribulose 5-phosphate: step 2/3. It functions in the pathway bacterial outer membrane biogenesis; lipopolysaccharide biosynthesis. The sequence is that of 2-dehydro-3-deoxyphosphooctonate aldolase from Polaromonas naphthalenivorans (strain CJ2).